A 1057-amino-acid chain; its full sequence is Carbamoyl phosphate synthase large chain (1057 aa).

The carboxyphosphate synthetic domain stretch occupies residues 1 to 401 (MPKRQDIETI…SLLKAIRSLE (401 aa)). Positions 129, 169, 175, 176, 208, 210, 215, 241, 242, 243, 284, and 298 each coordinate ATP. An ATP-grasp 1 domain is found at 133–327 (RTLMNDLGVP…IAKLAAKIAI (195 aa)). Residues glutamine 284, glutamate 298, and asparagine 300 each coordinate Mg(2+). Residues glutamine 284, glutamate 298, and asparagine 300 each coordinate Mn(2+). Residues 402–546 (YGVHHLGLPN…YGTYEYENES (145 aa)) are oligomerization domain. The carbamoyl phosphate synthetic domain stretch occupies residues 547–929 (VVTEKEKILV…ALFKGLTASG (383 aa)). Residues 671–861 (EALLHTIDVP…MAQLAMRAII (191 aa)) form the ATP-grasp 2 domain. ATP contacts are provided by arginine 707, arginine 746, leucine 748, glutamate 752, glycine 777, valine 778, histidine 779, serine 780, glutamine 820, and glutamate 832. The Mg(2+) site is built by glutamine 820, glutamate 832, and asparagine 834. Residues glutamine 820, glutamate 832, and asparagine 834 each coordinate Mn(2+). The MGS-like domain occupies 930–1057 (MEVKDHGTVL…ESMTFTMKNM (128 aa)). Residues 930-1057 (MEVKDHGTVL…ESMTFTMKNM (128 aa)) are allosteric domain.

This sequence belongs to the CarB family. Composed of two chains; the small (or glutamine) chain promotes the hydrolysis of glutamine to ammonia, which is used by the large (or ammonia) chain to synthesize carbamoyl phosphate. Tetramer of heterodimers (alpha,beta)4. Mg(2+) is required as a cofactor. The cofactor is Mn(2+).

The enzyme catalyses hydrogencarbonate + L-glutamine + 2 ATP + H2O = carbamoyl phosphate + L-glutamate + 2 ADP + phosphate + 2 H(+). It carries out the reaction hydrogencarbonate + NH4(+) + 2 ATP = carbamoyl phosphate + 2 ADP + phosphate + 2 H(+). The protein operates within amino-acid biosynthesis; L-arginine biosynthesis; carbamoyl phosphate from bicarbonate: step 1/1. It participates in pyrimidine metabolism; UMP biosynthesis via de novo pathway; (S)-dihydroorotate from bicarbonate: step 1/3. Large subunit of the glutamine-dependent carbamoyl phosphate synthetase (CPSase). CPSase catalyzes the formation of carbamoyl phosphate from the ammonia moiety of glutamine, carbonate, and phosphate donated by ATP, constituting the first step of 2 biosynthetic pathways, one leading to arginine and/or urea and the other to pyrimidine nucleotides. The large subunit (synthetase) binds the substrates ammonia (free or transferred from glutamine from the small subunit), hydrogencarbonate and ATP and carries out an ATP-coupled ligase reaction, activating hydrogencarbonate by forming carboxy phosphate which reacts with ammonia to form carbamoyl phosphate. In Staphylococcus saprophyticus subsp. saprophyticus (strain ATCC 15305 / DSM 20229 / NCIMB 8711 / NCTC 7292 / S-41), this protein is Carbamoyl phosphate synthase large chain.